A 267-amino-acid chain; its full sequence is S-adenosylmethionine decarboxylase proenzyme (267 aa).

The Schiff-base intermediate with substrate; via pyruvic acid role is filled by S114. S114 carries the post-translational modification Pyruvic acid (Ser); by autocatalysis. The active-site Proton acceptor; for processing activity is the H119. C142 functions as the Proton donor; for catalytic activity in the catalytic mechanism.

This sequence belongs to the prokaryotic AdoMetDC family. Type 2 subfamily. Heterooctamer of four alpha and four beta chains arranged as a tetramer of alpha/beta heterodimers. It depends on pyruvate as a cofactor. Is synthesized initially as an inactive proenzyme. Formation of the active enzyme involves a self-maturation process in which the active site pyruvoyl group is generated from an internal serine residue via an autocatalytic post-translational modification. Two non-identical subunits are generated from the proenzyme in this reaction, and the pyruvate is formed at the N-terminus of the alpha chain, which is derived from the carboxyl end of the proenzyme. The post-translation cleavage follows an unusual pathway, termed non-hydrolytic serinolysis, in which the side chain hydroxyl group of the serine supplies its oxygen atom to form the C-terminus of the beta chain, while the remainder of the serine residue undergoes an oxidative deamination to produce ammonia and the pyruvoyl group blocking the N-terminus of the alpha chain.

The catalysed reaction is S-adenosyl-L-methionine + H(+) = S-adenosyl 3-(methylsulfanyl)propylamine + CO2. The protein operates within amine and polyamine biosynthesis; S-adenosylmethioninamine biosynthesis; S-adenosylmethioninamine from S-adenosyl-L-methionine: step 1/1. Catalyzes the decarboxylation of S-adenosylmethionine to S-adenosylmethioninamine (dcAdoMet), the propylamine donor required for the synthesis of the polyamines spermine and spermidine from the diamine putrescine. This Erwinia tasmaniensis (strain DSM 17950 / CFBP 7177 / CIP 109463 / NCPPB 4357 / Et1/99) protein is S-adenosylmethionine decarboxylase proenzyme.